The sequence spans 661 residues: UvrABC system protein B (661 aa).

Positions 28–414 (DGVNERKRHQ…HTDEMVEQII (387 aa)) constitute a Helicase ATP-binding domain. 41 to 48 (GATGTGKT) serves as a coordination point for ATP. The short motif at 94–117 (YYDYYQPEAYVPSTDTFIEKDASI) is the Beta-hairpin element. In terms of domain architecture, Helicase C-terminal spans 432–598 (QIDDLLSEIQ…TINKKIHDVI (167 aa)). Residues 603–624 (ESDETNQQQQTELPKKMTKKER) form a disordered region. The UVR domain occupies 625-660 (QKTIENIEKEMKKAAKDLDFEKATELRDMLFELKAE).

Belongs to the UvrB family. As to quaternary structure, forms a heterotetramer with UvrA during the search for lesions. Interacts with UvrC in an incision complex.

It is found in the cytoplasm. In terms of biological role, the UvrABC repair system catalyzes the recognition and processing of DNA lesions. A damage recognition complex composed of 2 UvrA and 2 UvrB subunits scans DNA for abnormalities. Upon binding of the UvrA(2)B(2) complex to a putative damaged site, the DNA wraps around one UvrB monomer. DNA wrap is dependent on ATP binding by UvrB and probably causes local melting of the DNA helix, facilitating insertion of UvrB beta-hairpin between the DNA strands. Then UvrB probes one DNA strand for the presence of a lesion. If a lesion is found the UvrA subunits dissociate and the UvrB-DNA preincision complex is formed. This complex is subsequently bound by UvrC and the second UvrB is released. If no lesion is found, the DNA wraps around the other UvrB subunit that will check the other stand for damage. This Staphylococcus epidermidis (strain ATCC 12228 / FDA PCI 1200) protein is UvrABC system protein B.